Reading from the N-terminus, the 459-residue chain is ATP-dependent protease ATPase subunit HslU (459 aa).

ATP is bound by residues valine 26, glycine 68–glutamate 73, aspartate 271, glutamate 337, and arginine 409.

It belongs to the ClpX chaperone family. HslU subfamily. As to quaternary structure, a double ring-shaped homohexamer of HslV is capped on each side by a ring-shaped HslU homohexamer. The assembly of the HslU/HslV complex is dependent on binding of ATP.

The protein localises to the cytoplasm. Its function is as follows. ATPase subunit of a proteasome-like degradation complex; this subunit has chaperone activity. The binding of ATP and its subsequent hydrolysis by HslU are essential for unfolding of protein substrates subsequently hydrolyzed by HslV. HslU recognizes the N-terminal part of its protein substrates and unfolds these before they are guided to HslV for hydrolysis. The protein is ATP-dependent protease ATPase subunit HslU of Xylella fastidiosa (strain 9a5c).